The chain runs to 710 residues: Polyribonucleotide nucleotidyltransferase (710 aa).

D488 and D494 together coordinate Mg(2+). The region spanning P555–I614 is the KH domain. Residues G624–K692 enclose the S1 motif domain.

It belongs to the polyribonucleotide nucleotidyltransferase family. It depends on Mg(2+) as a cofactor.

The protein resides in the cytoplasm. The enzyme catalyses RNA(n+1) + phosphate = RNA(n) + a ribonucleoside 5'-diphosphate. In terms of biological role, involved in mRNA degradation. Catalyzes the phosphorolysis of single-stranded polyribonucleotides processively in the 3'- to 5'-direction. This chain is Polyribonucleotide nucleotidyltransferase, found in Maricaulis maris (strain MCS10) (Caulobacter maris).